The chain runs to 657 residues: Katanin p80 WD40 repeat-containing subunit B1 (657 aa).

WD repeat units follow at residues Ala18–Ser58, Gly61–Thr100, Gly103–Lys142, Ser145–Glu184, Gly187–Cys226, and Glu229–Val269. Disordered stretches follow at residues Asn318 to Pro410 and Val423 to Pro454. Positions Pro325 to Lys345 are enriched in polar residues. Residues His351–Phe385 show a composition bias toward basic and acidic residues.

This sequence belongs to the WD repeat KATNB1 family. Interacts with KATNA1. This interaction enhances the microtubule binding and severing activity of KATNA1 and also targets this activity to the centrosome.

It localises to the cytoplasm. Its subcellular location is the cytoskeleton. It is found in the microtubule organizing center. The protein localises to the centrosome. The protein resides in the spindle pole. It localises to the spindle. Participates in a complex which severs microtubules in an ATP-dependent manner. May act to target the enzymatic subunit of this complex to sites of action such as the centrosome. Microtubule severing may promote rapid reorganization of cellular microtubule arrays and the release of microtubules from the centrosome following nucleation. In Gallus gallus (Chicken), this protein is Katanin p80 WD40 repeat-containing subunit B1.